Consider the following 737-residue polypeptide: Ribosome-releasing factor 2, mitochondrial (737 aa).

The transit peptide at Met-1–Tyr-29 directs the protein to the mitochondrion. The tr-type G domain maps to Ser-31–Glu-310. Residues Ala-40 to Thr-47, Asp-104 to His-108, and Asn-158 to Asp-161 each bind GTP.

The protein belongs to the TRAFAC class translation factor GTPase superfamily. Classic translation factor GTPase family. EF-G/EF-2 subfamily.

It is found in the mitochondrion. Functionally, mitochondrial GTPase that mediates the disassembly of ribosomes from messenger RNA at the termination of mitochondrial protein biosynthesis. Not involved in the GTP-dependent ribosomal translocation step during translation elongation. In Drosophila pseudoobscura pseudoobscura (Fruit fly), this protein is Ribosome-releasing factor 2, mitochondrial.